The primary structure comprises 110 residues: DNA-binding protein Mlab_1482 (110 aa).

It belongs to the PDCD5 family.

In Methanocorpusculum labreanum (strain ATCC 43576 / DSM 4855 / Z), this protein is DNA-binding protein Mlab_1482.